The primary structure comprises 409 residues: Outer membrane protein assembly factor BamB (409 aa).

The first 34 residues, 1–34 (MAGNILLLILDYVFHAGSRTLRVCILSLLILLSG), serve as a signal peptide directing secretion. C35 is lipidated: N-palmitoyl cysteine. C35 carries the S-diacylglycerol cysteine lipid modification.

It belongs to the BamB family. In terms of assembly, part of the Bam complex.

It is found in the cell outer membrane. Its function is as follows. Part of the outer membrane protein assembly complex, which is involved in assembly and insertion of beta-barrel proteins into the outer membrane. This Nitrosomonas eutropha (strain DSM 101675 / C91 / Nm57) protein is Outer membrane protein assembly factor BamB.